A 197-amino-acid chain; its full sequence is 3-isopropylmalate dehydratase small subunit (197 aa).

This sequence belongs to the LeuD family. LeuD type 1 subfamily. In terms of assembly, heterodimer of LeuC and LeuD.

It catalyses the reaction (2R,3S)-3-isopropylmalate = (2S)-2-isopropylmalate. The protein operates within amino-acid biosynthesis; L-leucine biosynthesis; L-leucine from 3-methyl-2-oxobutanoate: step 2/4. In terms of biological role, catalyzes the isomerization between 2-isopropylmalate and 3-isopropylmalate, via the formation of 2-isopropylmaleate. This Streptomyces griseus subsp. griseus (strain JCM 4626 / CBS 651.72 / NBRC 13350 / KCC S-0626 / ISP 5235) protein is 3-isopropylmalate dehydratase small subunit.